The chain runs to 151 residues: 3-dehydroquinate dehydratase 1 (151 aa).

Residue Tyr24 is the Proton acceptor of the active site. Substrate is bound by residues Asn75, His81, and Asp88. His101 serves as the catalytic Proton donor. Substrate is bound by residues 102 to 103 (IS) and Arg112.

This sequence belongs to the type-II 3-dehydroquinase family. In terms of assembly, homododecamer.

The enzyme catalyses 3-dehydroquinate = 3-dehydroshikimate + H2O. The protein operates within metabolic intermediate biosynthesis; chorismate biosynthesis; chorismate from D-erythrose 4-phosphate and phosphoenolpyruvate: step 3/7. Catalyzes a trans-dehydration via an enolate intermediate. The sequence is that of 3-dehydroquinate dehydratase 1 (aroQ1) from Corynebacterium efficiens (strain DSM 44549 / YS-314 / AJ 12310 / JCM 11189 / NBRC 100395).